A 162-amino-acid chain; its full sequence is Transcription elongation factor GreA (162 aa).

Positions 45–74 form a coiled coil; it reads ENAEYEAAREKQAFIEGRIKELEDMTARAE.

It belongs to the GreA/GreB family.

Necessary for efficient RNA polymerase transcription elongation past template-encoded arresting sites. The arresting sites in DNA have the property of trapping a certain fraction of elongating RNA polymerases that pass through, resulting in locked ternary complexes. Cleavage of the nascent transcript by cleavage factors such as GreA or GreB allows the resumption of elongation from the new 3'terminus. GreA releases sequences of 2 to 3 nucleotides. In Rickettsia prowazekii (strain Madrid E), this protein is Transcription elongation factor GreA.